Consider the following 491-residue polypeptide: Anthranilate synthase component 1 (491 aa).

L-tryptophan-binding positions include S49 and 271 to 273 (PYL). Position 306–307 (306–307 (GT)) interacts with chorismate. E333 lines the Mg(2+) pocket. Residues Y421, R441, 455 to 457 (GAG), and G457 contribute to the chorismate site. Position 470 (E470) interacts with Mg(2+).

The protein belongs to the anthranilate synthase component I family. In terms of assembly, heterotetramer consisting of two non-identical subunits: a beta subunit (TrpG) and a large alpha subunit (TrpE). Mg(2+) serves as cofactor.

The enzyme catalyses chorismate + L-glutamine = anthranilate + pyruvate + L-glutamate + H(+). It functions in the pathway amino-acid biosynthesis; L-tryptophan biosynthesis; L-tryptophan from chorismate: step 1/5. Feedback inhibited by tryptophan. Its function is as follows. Part of a heterotetrameric complex that catalyzes the two-step biosynthesis of anthranilate, an intermediate in the biosynthesis of L-tryptophan. In the first step, the glutamine-binding beta subunit (TrpG) of anthranilate synthase (AS) provides the glutamine amidotransferase activity which generates ammonia as a substrate that, along with chorismate, is used in the second step, catalyzed by the large alpha subunit of AS (TrpE) to produce anthranilate. In the absence of TrpG, TrpE can synthesize anthranilate directly from chorismate and high concentrations of ammonia. This chain is Anthranilate synthase component 1 (trpE), found in Neisseria meningitidis serogroup A / serotype 4A (strain DSM 15465 / Z2491).